The chain runs to 156 residues: Ribosome maturation factor RimP (156 aa).

This sequence belongs to the RimP family.

The protein resides in the cytoplasm. Functionally, required for maturation of 30S ribosomal subunits. This Shouchella clausii (strain KSM-K16) (Alkalihalobacillus clausii) protein is Ribosome maturation factor RimP.